The primary structure comprises 152 residues: Lipoprotein signal peptidase (152 aa).

3 consecutive transmembrane segments (helical) span residues Leu-5–Val-25, Trp-61–His-81, and Leu-84–Ile-104. Residues Asp-114 and Asp-130 contribute to the active site. A helical membrane pass occupies residues Ile-125–Trp-145.

The protein belongs to the peptidase A8 family.

It localises to the cell membrane. The enzyme catalyses Release of signal peptides from bacterial membrane prolipoproteins. Hydrolyzes -Xaa-Yaa-Zaa-|-(S,diacylglyceryl)Cys-, in which Xaa is hydrophobic (preferably Leu), and Yaa (Ala or Ser) and Zaa (Gly or Ala) have small, neutral side chains.. It participates in protein modification; lipoprotein biosynthesis (signal peptide cleavage). In terms of biological role, this protein specifically catalyzes the removal of signal peptides from prolipoproteins. This is Lipoprotein signal peptidase from Streptococcus pyogenes serotype M18 (strain MGAS8232).